We begin with the raw amino-acid sequence, 317 residues long: Melanocyte-stimulating hormone receptor (317 aa).

At 1 to 37 the chain is on the extracellular side; sequence MPMQGAQRRLLGSLNSTPTATPNLGLAANHTGAPCLE. An N-linked (GlcNAc...) asparagine glycan is attached at Asn29. Residues 38–63 form a helical membrane-spanning segment; sequence VSIPDGLFLSLGLVSLVENVLVVAAI. The Cytoplasmic portion of the chain corresponds to 64–72; sequence AKNRNLHSP. Residues 73-93 form a helical membrane-spanning segment; sequence MYCFICCLALSDLLVSGSNML. Over 94 to 118 the chain is Extracellular; that stretch reads ETAVILLLEAGALATRASVVQQLQN. A helical transmembrane segment spans residues 119-140; sequence TIDVLTCSSMLCSLCFLGAIAV. Topologically, residues 141-163 are cytoplasmic; it reads DRYVSIFYALRYHSIVTLPRARR. A helical membrane pass occupies residues 164-183; it reads AIAAIWVASVLSSTLFIAYC. Residues 184-191 lie on the Extracellular side of the membrane; sequence DHAAVLLC. Residues 192–211 form a helical membrane-spanning segment; it reads LVVFFLAMLVLMAVLYVHML. Over 212–240 the chain is Cytoplasmic; sequence ARACQHAQGITRLHKRQLPAHQGFGLRGA. Residues 241–266 form a helical membrane-spanning segment; that stretch reads ATLTILLGIFFLCWGPFFLHLMLVVL. Topologically, residues 267–279 are extracellular; the sequence is CPQHLTCSCIFKN. A helical transmembrane segment spans residues 280–300; that stretch reads FKVFLTLIICNTIIDPLIYAF. The Cytoplasmic segment spans residues 301 to 317; it reads RSQELCRTLKEVLLCSW. A lipid anchor (S-palmitoyl cysteine) is attached at Cys315.

The protein belongs to the G-protein coupled receptor 1 family. Interacts with MGRN1, but does not undergo MGRN1-mediated ubiquitination; this interaction competes with GNAS-binding and thus inhibits agonist-induced cAMP production. Interacts with OPN3; the interaction results in a decrease in MC1R-mediated cAMP signaling and ultimately a decrease in melanin production in melanocytes.

The protein resides in the cell membrane. In terms of biological role, receptor for MSH (alpha, beta and gamma) and ACTH. The activity of this receptor is mediated by G proteins which activate adenylate cyclase. Mediates melanogenesis, the production of eumelanin (black/brown) and phaeomelanin (red/yellow), via regulation of cAMP signaling in melanocytes. The sequence is that of Melanocyte-stimulating hormone receptor (MC1R) from Alouatta palliata (Mantled howler monkey).